Reading from the N-terminus, the 81-residue chain is UPF0298 protein SAK_1599 (81 aa).

The protein belongs to the UPF0298 family.

It localises to the cytoplasm. In Streptococcus agalactiae serotype Ia (strain ATCC 27591 / A909 / CDC SS700), this protein is UPF0298 protein SAK_1599.